Here is a 532-residue protein sequence, read N- to C-terminus: Fe-S cluster assembly factor HCF101, chloroplastic (532 aa).

A chloroplast-targeting transit peptide spans 1 to 61 (MPLLHPQSLR…RVSQNLSVAK (61 aa)). N-acetylalanine is present on Ala62. 184-191 (CKGGVGKS) serves as a coordination point for ATP.

It belongs to the Mrp/NBP35 ATP-binding proteins family. It depends on [4Fe-4S] cluster as a cofactor. Expressed in aerial tissues exposed to light. Very low expression in roots.

Its subcellular location is the plastid. The protein resides in the chloroplast stroma. In terms of biological role, required for photosystem I (PSI) biosynthesis and assembly. May serve as a chloroplast scaffold protein that specifically assembles iron-sulfur (4Fe-4S) clusters and transfers them to the chloroplast PSI and ferredoxin-thioredoxin (FTR) complexes. Can assemble a 4Fe-4S cluster and transfer it to apoproteins in yeast cells. Probably not required for assembly or stability of plastidic 2Fe-2S clusters. This Arabidopsis thaliana (Mouse-ear cress) protein is Fe-S cluster assembly factor HCF101, chloroplastic (HCF101).